A 148-amino-acid chain; its full sequence is Prefoldin subunit alpha (148 aa).

It belongs to the prefoldin subunit alpha family. As to quaternary structure, heterohexamer of two alpha and four beta subunits.

Its subcellular location is the cytoplasm. In terms of biological role, molecular chaperone capable of stabilizing a range of proteins. Seems to fulfill an ATP-independent, HSP70-like function in archaeal de novo protein folding. The chain is Prefoldin subunit alpha (pfdA) from Pyrococcus horikoshii (strain ATCC 700860 / DSM 12428 / JCM 9974 / NBRC 100139 / OT-3).